The following is a 335-amino-acid chain: Galactosylgalactosylxylosylprotein 3-beta-glucuronosyltransferase 3 (335 aa).

Over 1-7 (MKLKLKN) the chain is Cytoplasmic. The helical; Signal-anchor for type II membrane protein transmembrane segment at 8 to 28 (VFLAYFLVSIAGLLYALVQLG) threads the bilayer. The Lumenal portion of the chain corresponds to 29–335 (QPCDCLPPLR…GQGSDPAIEV (307 aa)). Residues 82–84 (PTY), Asp-113, Arg-156, Arg-161, and 194–196 (DDD) contribute to the UDP-alpha-D-glucuronate site. A Mn(2+)-binding site is contributed by Asp-196. An interaction with galactose moiety of substrate glycoprotein region spans residues 243 to 252 (WEPNRPFPLD). Residue Glu-281 is the Proton donor/acceptor of the active site. The N-linked (GlcNAc...) asparagine glycan is linked to Asn-300. Residue 308–310 (HTR) coordinates UDP-alpha-D-glucuronate. The span at 312–322 (EKPKMKQEEQL) shows a compositional bias: basic and acidic residues. A disordered region spans residues 312-335 (EKPKMKQEEQLQRQGQGSDPAIEV).

The protein belongs to the glycosyltransferase 43 family. As to quaternary structure, homodimer; disulfide-linked. Interacts with PXYLP1; the interaction increases the 2-phosphoxylose phosphatase activity of PXYLP1 during completion of linkage region formation in a B3GAT3-mediated manner. Mn(2+) serves as cofactor. In terms of processing, N-glycosylated. As to expression, expressed in heart, aorta, bone, and also in osteoblasts.

It localises to the golgi apparatus membrane. It is found in the golgi apparatus. The protein localises to the cis-Golgi network. It carries out the reaction 3-O-(beta-D-galactosyl-(1-&gt;3)-beta-D-galactosyl-(1-&gt;4)-beta-D-xylosyl)-L-seryl-[protein] + UDP-alpha-D-glucuronate = 3-O-(beta-D-GlcA-(1-&gt;3)-beta-D-Gal-(1-&gt;3)-beta-D-Gal-(1-&gt;4)-beta-D-Xyl)-L-seryl-[protein] + UDP + H(+). It participates in protein modification; protein glycosylation. Functionally, glycosaminoglycans biosynthesis. Involved in forming the linkage tetrasaccharide present in heparan sulfate and chondroitin sulfate. Transfers a glucuronic acid moiety from the uridine diphosphate-glucuronic acid (UDP-GlcUA) to the common linkage region trisaccharide Gal-beta-1,3-Gal-beta-1,4-Xyl covalently bound to a Ser residue at the glycosaminylglycan attachment site of proteoglycans. Can also play a role in the biosynthesis of l2/HNK-1 carbohydrate epitope on glycoproteins. Stimulates 2-phosphoxylose phosphatase activity of PXYLP1 in presence of uridine diphosphate-glucuronic acid (UDP-GlcUA) during completion of linkage region formation. The chain is Galactosylgalactosylxylosylprotein 3-beta-glucuronosyltransferase 3 (B3gat3) from Mus musculus (Mouse).